The chain runs to 914 residues: UPF0182 protein PTH_1387 (914 aa).

Helical transmembrane passes span 7–27 (FAAYVLAGFGLIFLALTIAGA), 48–68 (IIISDLGLRLAVGLTFFVLLF), 109–129 (LLLLAFIALSALMAFLFNFTV), 173–193 (INWVILVSAFWVLAAYFVVYF), 209–229 (YHFSFLAAIFFGLKAAGYQLE), 252–272 (TLLAYKVLTYIALLCALAILI), and 281–301 (LVIYSIGVLLIASVLLGGIYP).

Belongs to the UPF0182 family.

It localises to the cell membrane. The chain is UPF0182 protein PTH_1387 from Pelotomaculum thermopropionicum (strain DSM 13744 / JCM 10971 / SI).